A 197-amino-acid polypeptide reads, in one-letter code: Phospholipid hydroperoxide glutathione peroxidase (197 aa).

Phosphoserine is present on Ser-40. Residue Sec-73 is part of the active site. Sec-73 is a non-standard amino acid (selenocysteine). Val-78 is modified (phosphoserine).

This sequence belongs to the glutathione peroxidase family. In terms of assembly, monomer. Has a tendency to form higher mass oligomers. Interacts with FUNDC1; this interaction promotes GPX4 recruitment into mitochondria through TOM/TIM complex where it is degraded by mitophagy. In terms of tissue distribution, present primarily in testis. Expressed in flagella of epididymal sperm. Isoform Cytoplasmic: Highly expressed in testis. Present in spermatogonia, spermatocyte and spermatid (at protein level).

The protein resides in the nucleus. It is found in the nucleolus. The protein localises to the mitochondrion. It localises to the cytoplasm. The catalysed reaction is a hydroperoxy polyunsaturated fatty acid + 2 glutathione = a hydroxy polyunsaturated fatty acid + glutathione disulfide + H2O. It catalyses the reaction 2 glutathione + H2O2 = glutathione disulfide + 2 H2O. The enzyme catalyses tert-butyl hydroperoxide + 2 glutathione = tert-butanol + glutathione disulfide + H2O. It carries out the reaction cumene hydroperoxide + 2 glutathione = 2-phenylpropan-2-ol + glutathione disulfide + H2O. The catalysed reaction is (9S)-hydroperoxy-(10E,12Z)-octadecadienoate + 2 glutathione = (9S)-hydroxy-(10E,12Z)-octadecadienoate + glutathione disulfide + H2O. It catalyses the reaction (13S)-hydroperoxy-(9Z,11E)-octadecadienoate + 2 glutathione = (13S)-hydroxy-(9Z,11E)-octadecadienoate + glutathione disulfide + H2O. The enzyme catalyses (5S)-hydroperoxy-(6E,8Z,11Z,14Z)-eicosatetraenoate + 2 glutathione = (5S)-hydroxy-(6E,8Z,11Z,14Z)-eicosatetraenoate + glutathione disulfide + H2O. It carries out the reaction (12R)-hydroperoxy-(5Z,8Z,10E,14Z)-eicosatetraenoate + 2 glutathione = (12R)-hydroxy-(5Z,8Z,10E,14Z)-eicosatetraenoate + glutathione disulfide + H2O. The catalysed reaction is (12S)-hydroperoxy-(5Z,8Z,10E,14Z)-eicosatetraenoate + 2 glutathione = (12S)-hydroxy-(5Z,8Z,10E,14Z)-eicosatetraenoate + glutathione disulfide + H2O. It catalyses the reaction (15S)-hydroperoxy-(5Z,8Z,11Z,13E)-eicosatetraenoate + 2 glutathione = (15S)-hydroxy-(5Z,8Z,11Z,13E)-eicosatetraenoate + glutathione disulfide + H2O. The enzyme catalyses (5S)-hydroperoxy-(6E,8Z,11Z,14Z,17Z)-eicosapentaenoate + 2 glutathione = (5S)-hydroxy-(6E,8Z,11Z,14Z,17Z)-eicosapentaenoate + glutathione disulfide + H2O. It carries out the reaction (12S)-hydroperoxy-(5Z,8Z,10E,14Z,17Z)-eicosapentaenoate + 2 glutathione = (12S)-hydroxy-(5Z,8Z,10E,14Z,17Z)-eicosapentaenoate + glutathione disulfide + H2O. The catalysed reaction is (15S)-hydroperoxy-(5Z,8Z,11Z,13E,17Z)-eicosapentaenoate + 2 glutathione = (15S)-hydroxy-(5Z,8Z,11Z,13E,17Z)-eicosapentaenoate + glutathione disulfide + H2O. It catalyses the reaction (15S)-hydroperoxy-(11Z,13E)-eicosadienoate + 2 glutathione = (15S)-hydroxy-(11Z,13E)-eicosadienoate + glutathione disulfide + H2O. The enzyme catalyses (17S)-hydroperoxy-(4Z,7Z,10Z,13Z,15E,19Z)-docosahexaenoate + 2 glutathione = (17S)-hydroxy-(4Z,7Z,10Z,13Z,15E,19Z)-docosahexaenoate + glutathione disulfide + H2O. It carries out the reaction a hydroperoxy-1,2-diacyl-glycero-3-phosphocholine + 2 glutathione = a hydroxy-1,2-diacyl-glycero-3-phosphocholine + glutathione disulfide + H2O. Functionally, essential antioxidant peroxidase that directly reduces phospholipid hydroperoxide even if they are incorporated in membranes and lipoproteins. Can also reduce fatty acid hydroperoxide, cholesterol hydroperoxide and thymine hydroperoxide. Plays a key role in protecting cells from oxidative damage by preventing membrane lipid peroxidation. Required to prevent cells from ferroptosis, a non-apoptotic cell death resulting from an iron-dependent accumulation of lipid reactive oxygen species. The presence of selenocysteine (Sec) versus Cys at the active site is essential for life: it provides resistance to overoxidation and prevents cells against ferroptosis. The presence of Sec at the active site is also essential for the survival of a specific type of parvalbumin-positive interneurons, thereby preventing against fatal epileptic seizures. May be required to protect cells from the toxicity of ingested lipid hydroperoxides. Required for normal sperm development and male fertility. Essential for maturation and survival of photoreceptor cells. Plays a role in a primary T-cell response to viral and parasitic infection by protecting T-cells from ferroptosis and by supporting T-cell expansion. Plays a role of glutathione peroxidase in platelets in the arachidonic acid metabolism. Reduces hydroperoxy ester lipids formed by a 15-lipoxygenase that may play a role as down-regulator of the cellular 15-lipoxygenase pathway. Can also reduce small soluble hydroperoxides such as H2O2, cumene hydroperoxide and tert-butyl hydroperoxide. Its function is as follows. Specifically able to suppress the production of leukotriene and prostaglandin in response to several stimuli by reducing fatty acid hydroperoxide. Specifically required to prevent mitochondrial cell death by mediating reduction of cardiolipin hydroperoxide. Also required for normal sperm development and male fertility. In terms of biological role, required for male fertility by stabilizing the condensed chromatin in sperm nuclei. The protein is Phospholipid hydroperoxide glutathione peroxidase of Rattus norvegicus (Rat).